We begin with the raw amino-acid sequence, 1370 residues long: Zinc finger MYM-type protein 3 (1370 aa).

Low complexity-rich tracts occupy residues 1–12, 40–56, and 130–146; these read MDPSDFPSPFDP, APSR…SSGA, and GAGA…EPLA. Disordered stretches follow at residues 1–73 and 85–310; these read MDPS…PGGV and GLLY…MGTK. The span at 227–255 shows a compositional bias: basic and acidic residues; sequence TGKEIEKPPERVQKRSERVRRAEPPKPEV. Ser-265 and Ser-269 each carry phosphoserine. Positions 265-281 are enriched in acidic residues; that stretch reads SDEDSDAMVDDPNDEDF. Glycyl lysine isopeptide (Lys-Gly) (interchain with G-Cter in SUMO2) cross-links involve residues Lys-310, Lys-322, and Lys-330. MYM-type zinc fingers lie at residues 334–368, 380–424, 431–466, 479–513, 523–561, 569–606, 614–648, 655–694, and 701–735; these read QLFC…TKDS, HEFC…LHEV, HRLC…RPGG, KRFC…FEML, SLFC…PCYY, YQFC…KPEV, FQFC…HEKL, KSFC…GVTE, and WDFC…LETI. Residues 761 to 789 show a composition bias toward polar residues; that stretch reads NLDTQSGPESLLNSQSSESKPQTPSQTKV. Positions 761 to 831 are disordered; that stretch reads NLDTQSGPES…PPPPATPRKN (71 aa). Glycyl lysine isopeptide (Lys-Gly) (interchain with G-Cter in SUMO2) cross-links involve residues Lys-780 and Lys-788. The segment covering 790 to 799 has biased composition (basic and acidic residues); that stretch reads ENNHTVRTPD. At Thr-797 the chain carries Phosphothreonine. Residue Lys-806 forms a Glycyl lysine isopeptide (Lys-Gly) (interchain with G-Cter in SUMO2) linkage. Pro residues predominate over residues 816–827; it reads VPTPPPPPPPAT. 2 positions are modified to phosphothreonine: Thr-818 and Thr-827. Residues Lys-848, Lys-862, Lys-921, and Lys-1276 each participate in a glycyl lysine isopeptide (Lys-Gly) (interchain with G-Cter in SUMO2) cross-link.

In terms of assembly, may be a component of a BHC histone deacetylase complex that contains HDAC1, HDAC2, HMG20B/BRAF35, KDM1A, RCOR1/CoREST, PHF21A/BHC80, ZMYM2, ZNF217, ZMYM3, GSE1 and GTF2I. As to expression, ubiquitously expressed in all embryonic stages and adult tissues.

The protein resides in the nucleus. Its function is as follows. Plays a role in the regulation of cell morphology and cytoskeletal organization. The chain is Zinc finger MYM-type protein 3 (Zmym3) from Mus musculus (Mouse).